The primary structure comprises 244 residues: Serine-rich single-pass membrane protein 1 (244 aa).

A helical membrane pass occupies residues 35 to 55 (CGTIGSFLLWYFVIVFVLMFF). 3 disordered regions span residues 65–114 (DKKD…PVTN), 126–191 (QRRA…LGSY), and 210–244 (LAHH…FSKF). Residues 80–94 (ASKETSCKRQSKDSA) are compositionally biased toward basic and acidic residues. 2 stretches are compositionally biased toward polar residues: residues 96–114 (DPSQ…PVTN) and 132–142 (QSQFNEVNQNQ). Basic and acidic residues predominate over residues 161-176 (SWKESESEHHPSPDSI).

The protein localises to the membrane. This Homo sapiens (Human) protein is Serine-rich single-pass membrane protein 1 (SSMEM1).